We begin with the raw amino-acid sequence, 308 residues long: MIIVTGGAGFIGSNIVKALNDLGRKDILVVDNLKDGTKFANLVDLDIADYCDKEDFIASIIAGDEFGDIDAVFHEGACSATTEWDGKYIMHNNYEYSKELLHYCLDREIPFFYASSAATYGDTKVFREEREFEGPLNVYGYSKFLFDQYVRNILPEAKSPVCGFRYFNVYGPRENHKGSMASVAFHLNNQILKGENPKLFAGSEGFRRDFVYVGDVAAVNIWCWQNGISGIYNLGTGNAESFRAVADAVVKFHGKGEIETIPFPEHLKSRYQEYTQADLTKLRSTGYDKPFKTVAEGVAEYMAWLNRK.

Residues 10-11 (FI), 31-32 (DN), Lys-38, Lys-53, 75-79 (EGACS), and Asn-92 each bind NADP(+). Tyr-139 functions as the Proton acceptor in the catalytic mechanism. Position 143 (Lys-143) interacts with NADP(+). Asn-168 is a binding site for substrate. NADP(+) is bound by residues Val-169 and Lys-177. Residue Lys-177 is the Proton acceptor of the active site. Residues Ser-179, His-186, 200-203 (FAGS), Arg-208, and Tyr-271 contribute to the substrate site.

The protein belongs to the NAD(P)-dependent epimerase/dehydratase family. HldD subfamily. As to quaternary structure, homopentamer. Requires NADP(+) as cofactor.

The enzyme catalyses ADP-D-glycero-beta-D-manno-heptose = ADP-L-glycero-beta-D-manno-heptose. It participates in nucleotide-sugar biosynthesis; ADP-L-glycero-beta-D-manno-heptose biosynthesis; ADP-L-glycero-beta-D-manno-heptose from D-glycero-beta-D-manno-heptose 7-phosphate: step 4/4. Functionally, catalyzes the interconversion between ADP-D-glycero-beta-D-manno-heptose and ADP-L-glycero-beta-D-manno-heptose via an epimerization at carbon 6 of the heptose. The protein is ADP-L-glycero-D-manno-heptose-6-epimerase of Haemophilus influenzae (strain PittGG).